We begin with the raw amino-acid sequence, 281 residues long: Nucleotide-binding protein Patl_0571 (281 aa).

An ATP-binding site is contributed by 8–15 (GRSGSGKS). GTP is bound at residue 56-59 (DVRN).

Belongs to the RapZ-like family.

In terms of biological role, displays ATPase and GTPase activities. This is Nucleotide-binding protein Patl_0571 from Pseudoalteromonas atlantica (strain T6c / ATCC BAA-1087).